The primary structure comprises 298 residues: Glutamyl-Q tRNA(Asp) synthetase (298 aa).

L-glutamate is bound by residues 9–13 (RFAPS) and Glu45. Residues 12–22 (PSPSGELHFGS) carry the 'HIGH' region motif. Residues Cys101, Cys103, Tyr115, and Cys119 each coordinate Zn(2+). L-glutamate is bound by residues Tyr172 and Arg190. The 'KMSKS' region signature appears at 228–232 (KLSKQ). Residue Lys231 coordinates ATP.

Belongs to the class-I aminoacyl-tRNA synthetase family. GluQ subfamily. Requires Zn(2+) as cofactor.

In terms of biological role, catalyzes the tRNA-independent activation of glutamate in presence of ATP and the subsequent transfer of glutamate onto a tRNA(Asp). Glutamate is transferred on the 2-amino-5-(4,5-dihydroxy-2-cyclopenten-1-yl) moiety of the queuosine in the wobble position of the QUC anticodon. In Cronobacter sakazakii (strain ATCC BAA-894) (Enterobacter sakazakii), this protein is Glutamyl-Q tRNA(Asp) synthetase.